The following is a 188-amino-acid chain: CASP-like protein 4B3 (188 aa).

A disordered region spans residues 1–21; the sequence is MSFSPASSEPHDAPAAAGSSV. At 1–42 the chain is on the cytoplasmic side; the sequence is MSFSPASSEPHDAPAAAGSSVPASRSIAERWKMEAAPIRARL. A helical membrane pass occupies residues 43-63; the sequence is LLRAFAWLFSLLALVVMATDV. At 64-76 the chain is on the extracellular side; that stretch reads HGRGGAQDFSTYP. A helical membrane pass occupies residues 77-97; sequence EYNYCLGMSIIALLYATAQLV. The Cytoplasmic segment spans residues 98 to 114; the sequence is RDAHRLSSGRDLVAGRK. Residues 115-135 traverse the membrane as a helical segment; sequence AAAVVDFAGDQVVAYSLISGL. Topologically, residues 136 to 156 are extracellular; it reads SAAAPVTDYMRQATDNLFNDS. Residue Asn-154 is glycosylated (N-linked (GlcNAc...) asparagine). Residues 157–177 form a helical membrane-spanning segment; sequence AAAAISLAFFAFLAISLSALI. Over 178–188 the chain is Cytoplasmic; that stretch reads SGYNLSLEAIV.

This sequence belongs to the Casparian strip membrane proteins (CASP) family. Homodimer and heterodimers.

The protein localises to the cell membrane. The chain is CASP-like protein 4B3 from Hordeum vulgare subsp. vulgare (Domesticated barley).